Consider the following 477-residue polypeptide: Cysteine--tRNA ligase (477 aa).

C29 is a Zn(2+) binding site. The 'HIGH' region signature appears at 31–41 (PTVYDFAHIGN). Positions 224, 249, and 253 each coordinate Zn(2+). The short motif at 282–286 (KMSKS) is the 'KMSKS' region element. K285 is a binding site for ATP.

The protein belongs to the class-I aminoacyl-tRNA synthetase family. As to quaternary structure, monomer. Zn(2+) serves as cofactor.

Its subcellular location is the cytoplasm. The catalysed reaction is tRNA(Cys) + L-cysteine + ATP = L-cysteinyl-tRNA(Cys) + AMP + diphosphate. In Nitrobacter winogradskyi (strain ATCC 25391 / DSM 10237 / CIP 104748 / NCIMB 11846 / Nb-255), this protein is Cysteine--tRNA ligase.